The sequence spans 339 residues: Anthranilate phosphoribosyltransferase (339 aa).

5-phospho-alpha-D-ribose 1-diphosphate-binding positions include G78, 81–82 (GD), T86, 88–91 (NAST), 106–114 (KHGNRSVTS), and S118. G78 provides a ligand contact to anthranilate. S90 is a binding site for Mg(2+). Residue N109 coordinates anthranilate. R164 serves as a coordination point for anthranilate. Residues D225 and E226 each contribute to the Mg(2+) site. The segment covering 248–265 (TVAPEDVGLDRADPKDVA) has biased composition (basic and acidic residues). Positions 248–271 (TVAPEDVGLDRADPKDVAGADPET) are disordered.

It belongs to the anthranilate phosphoribosyltransferase family. Homodimer. Requires Mg(2+) as cofactor.

It catalyses the reaction N-(5-phospho-beta-D-ribosyl)anthranilate + diphosphate = 5-phospho-alpha-D-ribose 1-diphosphate + anthranilate. The protein operates within amino-acid biosynthesis; L-tryptophan biosynthesis; L-tryptophan from chorismate: step 2/5. In terms of biological role, catalyzes the transfer of the phosphoribosyl group of 5-phosphorylribose-1-pyrophosphate (PRPP) to anthranilate to yield N-(5'-phosphoribosyl)-anthranilate (PRA). This is Anthranilate phosphoribosyltransferase from Methanopyrus kandleri (strain AV19 / DSM 6324 / JCM 9639 / NBRC 100938).